The following is a 118-amino-acid chain: Large ribosomal subunit protein uL18 (118 aa).

It belongs to the universal ribosomal protein uL18 family. As to quaternary structure, part of the 50S ribosomal subunit; part of the 5S rRNA/L5/L18/L25 subcomplex. Contacts the 5S and 23S rRNAs.

Its function is as follows. This is one of the proteins that bind and probably mediate the attachment of the 5S RNA into the large ribosomal subunit, where it forms part of the central protuberance. The polypeptide is Large ribosomal subunit protein uL18 (Phenylobacterium zucineum (strain HLK1)).